A 302-amino-acid chain; its full sequence is NAD kinase 2 (302 aa).

The active-site Proton acceptor is D78. Residues 78 to 79 (DG), 152 to 153 (NE), D182, 193 to 198 (TAYALS), and A217 each bind NAD(+).

This sequence belongs to the NAD kinase family. The cofactor is a divalent metal cation.

It localises to the cytoplasm. The enzyme catalyses NAD(+) + ATP = ADP + NADP(+) + H(+). Functionally, involved in the regulation of the intracellular balance of NAD and NADP, and is a key enzyme in the biosynthesis of NADP. Catalyzes specifically the phosphorylation on 2'-hydroxyl of the adenosine moiety of NAD to yield NADP. The chain is NAD kinase 2 from Parasynechococcus marenigrum (strain WH8102).